The chain runs to 320 residues: Acetyl-coenzyme A carboxylase carboxyl transferase subunit alpha (320 aa).

The 262-residue stretch at A33 to A294 folds into the CoA carboxyltransferase C-terminal domain.

Belongs to the AccA family. As to quaternary structure, acetyl-CoA carboxylase is a heterohexamer composed of biotin carboxyl carrier protein (AccB), biotin carboxylase (AccC) and two subunits each of ACCase subunit alpha (AccA) and ACCase subunit beta (AccD).

It localises to the cytoplasm. The catalysed reaction is N(6)-carboxybiotinyl-L-lysyl-[protein] + acetyl-CoA = N(6)-biotinyl-L-lysyl-[protein] + malonyl-CoA. It participates in lipid metabolism; malonyl-CoA biosynthesis; malonyl-CoA from acetyl-CoA: step 1/1. Functionally, component of the acetyl coenzyme A carboxylase (ACC) complex. First, biotin carboxylase catalyzes the carboxylation of biotin on its carrier protein (BCCP) and then the CO(2) group is transferred by the carboxyltransferase to acetyl-CoA to form malonyl-CoA. The sequence is that of Acetyl-coenzyme A carboxylase carboxyl transferase subunit alpha from Caulobacter sp. (strain K31).